A 103-amino-acid chain; its full sequence is Large ribosomal subunit protein eL42 (103 aa).

2 residues coordinate Zn(2+): C18 and C21. A C4-type zinc finger spans residues 18-81 (CPKCRTHTEH…TVLKLKCSKC (64 aa)). Residues 40–62 (LSEGERRYARKKKGYGSKRKPEQ) form a disordered region. The segment covering 47–57 (YARKKKGYGSK) has biased composition (basic residues). Residues C78 and C81 each contribute to the Zn(2+) site.

Belongs to the eukaryotic ribosomal protein eL42 family. Part of the 50S ribosomal subunit. The cofactor is Zn(2+).

Binds to the 23S rRNA. The sequence is that of Large ribosomal subunit protein eL42 from Desulfurococcus amylolyticus (strain DSM 18924 / JCM 16383 / VKM B-2413 / 1221n) (Desulfurococcus kamchatkensis).